The following is a 350-amino-acid chain: Nicotinate-nucleotide--dimethylbenzimidazole phosphoribosyltransferase (350 aa).

The active-site Proton acceptor is the glutamate 317.

The protein belongs to the CobT family.

The enzyme catalyses 5,6-dimethylbenzimidazole + nicotinate beta-D-ribonucleotide = alpha-ribazole 5'-phosphate + nicotinate + H(+). Its pathway is nucleoside biosynthesis; alpha-ribazole biosynthesis; alpha-ribazole from 5,6-dimethylbenzimidazole: step 1/2. Functionally, catalyzes the synthesis of alpha-ribazole-5'-phosphate from nicotinate mononucleotide (NAMN) and 5,6-dimethylbenzimidazole (DMB). The chain is Nicotinate-nucleotide--dimethylbenzimidazole phosphoribosyltransferase from Shewanella oneidensis (strain ATCC 700550 / JCM 31522 / CIP 106686 / LMG 19005 / NCIMB 14063 / MR-1).